Reading from the N-terminus, the 417-residue chain is Serine hydroxymethyltransferase (417 aa).

Residues Leu121 and Gly125–Leu127 contribute to the (6S)-5,6,7,8-tetrahydrofolate site. Lys229 carries the N6-(pyridoxal phosphate)lysine modification. Position 355-357 (Ser355–Phe357) interacts with (6S)-5,6,7,8-tetrahydrofolate.

The protein belongs to the SHMT family. In terms of assembly, homodimer. It depends on pyridoxal 5'-phosphate as a cofactor.

Its subcellular location is the cytoplasm. It carries out the reaction (6R)-5,10-methylene-5,6,7,8-tetrahydrofolate + glycine + H2O = (6S)-5,6,7,8-tetrahydrofolate + L-serine. The protein operates within one-carbon metabolism; tetrahydrofolate interconversion. Its pathway is amino-acid biosynthesis; glycine biosynthesis; glycine from L-serine: step 1/1. In terms of biological role, catalyzes the reversible interconversion of serine and glycine with tetrahydrofolate (THF) serving as the one-carbon carrier. This reaction serves as the major source of one-carbon groups required for the biosynthesis of purines, thymidylate, methionine, and other important biomolecules. Also exhibits THF-independent aldolase activity toward beta-hydroxyamino acids, producing glycine and aldehydes, via a retro-aldol mechanism. This chain is Serine hydroxymethyltransferase, found in Erwinia tasmaniensis (strain DSM 17950 / CFBP 7177 / CIP 109463 / NCPPB 4357 / Et1/99).